Reading from the N-terminus, the 245-residue chain is Rhamnosyl O-methyltransferase (245 aa).

A signal peptide spans 1-38 (MGLVWRSRTSLVGQLIGLVRLVASFAAQLFYRPSDAVA).

It belongs to the rhamnosyl O-methyltransferase family.

In terms of biological role, catalyzes the O-methylation of the hydroxyl group located on C-2 of the first rhamnosyl residue linked to the phenolic group of glycosylated phenolphthiocerol dimycocerosates (PGL) and p-hydroxybenzoic acid derivatives (p-HBAD). The polypeptide is Rhamnosyl O-methyltransferase (Mycobacterium bovis (strain ATCC BAA-935 / AF2122/97)).